The following is a 198-amino-acid chain: Recombination protein RecR (198 aa).

The C4-type zinc finger occupies 57 to 72 (CSSCGHITDKDPCYIC). The region spanning 80-175 (SIICVVQDPK…KITRIAHGLP (96 aa)) is the Toprim domain.

The protein belongs to the RecR family.

In terms of biological role, may play a role in DNA repair. It seems to be involved in an RecBC-independent recombinational process of DNA repair. It may act with RecF and RecO. The chain is Recombination protein RecR from Anoxybacillus flavithermus (strain DSM 21510 / WK1).